Here is a 517-residue protein sequence, read N- to C-terminus: Pentatricopeptide repeat-containing protein At1g77360, mitochondrial (517 aa).

The transit peptide at 1–59 (MKRFRIRSVDFRQLVNFFSFMRWECSSSATVWVRFNMTIRIINRQSRFCCKSFLSARLY) directs the protein to the mitochondrion. PPR repeat units follow at residues 133–163 (SVRAYHMMIESTAKIRQYKLMWDLINAMRKK), 167–201 (NVETFCIVMRKYARAQKVDEAIYAFNVMEKYDLPP), 202–232 (NLVAFNGLLSALCKSKNVRKAQEVFENMRDR), 236–270 (DSKTYSILLEGWGKEPNLPKAREVFREMIDAGCHP), 271–305 (DIVTYSIMVDILCKAGRVDEALGIVRSMDPSICKP), 306–340 (TTFIYSVLVHTYGTENRLEEAVDTFLEMERSGMKA), 341–375 (DVAVFNSLIGAFCKANRMKNVYRVLKEMKSKGVTP), 376–406 (NSKSCNIILRHLIERGEKDEAFDVFRKMIKV), 410–444 (DADTYTMVIKMFCEKKEMETADKVWKYMRKKGVFP), and 445–479 (SMHTFSVLINGLCEERTTQKACVLLEEMIEMGIRP).

The protein belongs to the PPR family. P subfamily.

It is found in the mitochondrion. The protein is Pentatricopeptide repeat-containing protein At1g77360, mitochondrial of Arabidopsis thaliana (Mouse-ear cress).